We begin with the raw amino-acid sequence, 233 residues long: Eukaryotic translation initiation factor 3 subunit G (233 aa).

The region spanning 152–229 (PSIMVSNLSQ…LVLSLEFAKK (78 aa)) is the RRM domain.

The protein belongs to the eIF-3 subunit G family. As to quaternary structure, component of the eukaryotic translation initiation factor 3 (eIF-3) complex.

The protein resides in the cytoplasm. Functionally, RNA-binding component of the eukaryotic translation initiation factor 3 (eIF-3) complex, which is involved in protein synthesis of a specialized repertoire of mRNAs and, together with other initiation factors, stimulates binding of mRNA and methionyl-tRNAi to the 40S ribosome. The eIF-3 complex specifically targets and initiates translation of a subset of mRNAs involved in cell proliferation. This subunit can bind 18S rRNA. This is Eukaryotic translation initiation factor 3 subunit G (eif3G) from Dictyostelium discoideum (Social amoeba).